Here is a 391-residue protein sequence, read N- to C-terminus: Galactarate dehydratase (D-threo-forming) (391 aa).

Arg15 provides a ligand contact to substrate. Mg(2+)-binding residues include Asp42 and His45. Tyr89 serves as a coordination point for substrate. Tyr90 functions as the Proton donor in the catalytic mechanism. Tyr164 (proton acceptor) is an active-site residue. Residues Asp193, Glu221, and His246 each contribute to the Mg(2+) site. Thr296 contacts substrate. Thr297 contributes to the Mg(2+) binding site. Arg385 contributes to the substrate binding site.

This sequence belongs to the mandelate racemase/muconate lactonizing enzyme family. Mg(2+) is required as a cofactor.

It catalyses the reaction galactarate = (2S,3R)-dihydroxy-5-oxohexanedioate + H2O. Functionally, catalyzes the regioselective dehydration of galactarate into 2-keto-D-threo-4,5-dihydroxyadipate ((2S,3R)-dihydroxy-5-oxohexanedioate). Is not active on other acid sugars. This is Galactarate dehydratase (D-threo-forming) from Oceanobacillus iheyensis (strain DSM 14371 / CIP 107618 / JCM 11309 / KCTC 3954 / HTE831).